Here is a 385-residue protein sequence, read N- to C-terminus: Putative type I restriction enzyme specificity subunit S.HindORF215P (385 aa).

It belongs to the type-I restriction system S methylase family.

Its function is as follows. A putative specificity subunit for a type I restriction enzyme; the corresponding endonuclease and methylase subunits have multiple frameshifts and are probably not expressed. The protein is Putative type I restriction enzyme specificity subunit S.HindORF215P of Haemophilus influenzae (strain ATCC 51907 / DSM 11121 / KW20 / Rd).